The following is a 123-amino-acid chain: Snaclec echicetin subunit beta (123 aa).

In terms of domain architecture, C-type lectin spans 1 to 121 (NCLPDWSVYE…SGEFYFVCKC (121 aa)). 3 disulfide bridges follow: Cys-2-Cys-13, Cys-30-Cys-119, and Cys-96-Cys-111.

This sequence belongs to the snaclec family. As to quaternary structure, heterodimer of subunits alpha and beta; disulfide-linked. Forms an active complex with the pentameric immunoglobuline Mkappa (IgMkappa). Expressed by the venom gland.

The protein resides in the secreted. Echicetin itself inhibits aggregation of washed platelets induced by vWF, thrombin or alboaggregin-A. However, when complexed with the pentameric plasma immunoglobulin Mkappa (IgMkappa), echicetin binds specifically to GPIb and activates platelets. This is caused by P-selectin expression and activation of alpha-IIb/beta-3 as well as tyrosine phosphorylation of several signal transduction molecules, including p53/56(LYN), p64, p72(SYK), p70 to p90, and p120. In vivo, it induces thrombocytopenia when injected into mice, probably accounting of activation of platelets rather than inhibition. The protein is Snaclec echicetin subunit beta of Echis carinatus sochureki (Saw-scaled viper).